The sequence spans 273 residues: Undecaprenyl-diphosphatase (273 aa).

Transmembrane regions (helical) follow at residues 43-63 (IGNVFEVVIQLGAILAVCWEY), 82-102 (KFVLNLLIAFLPAAIVGVLLI), 109-129 (LFNPVAVACALVVGGLVILWA), 185-205 (TEFSFFLAIPIMFAATAYDVL), 214-234 (ADLPTFGTGFLFAFLSAFVAV), and 249-269 (FAWYRIVFGLIILGSWWLGWI).

Belongs to the UppP family.

It is found in the cell inner membrane. It carries out the reaction di-trans,octa-cis-undecaprenyl diphosphate + H2O = di-trans,octa-cis-undecaprenyl phosphate + phosphate + H(+). In terms of biological role, catalyzes the dephosphorylation of undecaprenyl diphosphate (UPP). Confers resistance to bacitracin. The chain is Undecaprenyl-diphosphatase from Laribacter hongkongensis (strain HLHK9).